The following is a 188-amino-acid chain: UPF0488 protein C8orf33 homolog (188 aa).

Disordered stretches follow at residues 1–65, 87–112, and 144–182; these read MAAP…AEAQ, QRPT…TPLP, and AHSA…RDEE. A2 bears the N-acetylalanine mark. S41 carries the post-translational modification Phosphoserine. Basic and acidic residues predominate over residues 166–182; it reads PRPEGRSKGTSDTRDEE.

It belongs to the UPF0488 family.

The polypeptide is UPF0488 protein C8orf33 homolog (Bos taurus (Bovine)).